The primary structure comprises 121 residues: Small ribosomal subunit protein uS13 (121 aa).

The tract at residues 93 to 121 is disordered; that stretch reads RGLPMRGQRTRTNARTRKGPRKGAAALKK.

Belongs to the universal ribosomal protein uS13 family. As to quaternary structure, part of the 30S ribosomal subunit. Forms a loose heterodimer with protein S19. Forms two bridges to the 50S subunit in the 70S ribosome.

Its function is as follows. Located at the top of the head of the 30S subunit, it contacts several helices of the 16S rRNA. In the 70S ribosome it contacts the 23S rRNA (bridge B1a) and protein L5 of the 50S subunit (bridge B1b), connecting the 2 subunits; these bridges are implicated in subunit movement. Contacts the tRNAs in the A and P-sites. This chain is Small ribosomal subunit protein uS13, found in Acidovorax ebreus (strain TPSY) (Diaphorobacter sp. (strain TPSY)).